The following is a 388-amino-acid chain: Phosphopentomutase (388 aa).

The Mn(2+) site is built by Asp10, Asp282, His287, Asp323, His324, and His335.

It belongs to the phosphopentomutase family. The cofactor is Mn(2+).

It is found in the cytoplasm. It catalyses the reaction 2-deoxy-alpha-D-ribose 1-phosphate = 2-deoxy-D-ribose 5-phosphate. The catalysed reaction is alpha-D-ribose 1-phosphate = D-ribose 5-phosphate. Its pathway is carbohydrate degradation; 2-deoxy-D-ribose 1-phosphate degradation; D-glyceraldehyde 3-phosphate and acetaldehyde from 2-deoxy-alpha-D-ribose 1-phosphate: step 1/2. Isomerase that catalyzes the conversion of deoxy-ribose 1-phosphate (dRib-1-P) and ribose 1-phosphate (Rib-1-P) to deoxy-ribose 5-phosphate (dRib-5-P) and ribose 5-phosphate (Rib-5-P), respectively. In Carboxydothermus hydrogenoformans (strain ATCC BAA-161 / DSM 6008 / Z-2901), this protein is Phosphopentomutase.